A 94-amino-acid chain; its full sequence is Surfactant-associated protein 3 (94 aa).

Found in lung alveolar cells type I and II, as well as alveolar macrophages (at protein level). Detected also in testis and kidney. Expressed by different tissues of the ocular system like cornea, conjuctiva, lacrimal gland, eyelid and efferent tear ducts (at protein level). From these tissues is secreted into the tear film (at protein level).

Its subcellular location is the cytoplasm. It localises to the secreted. Its function is as follows. Putative surfactant protein. May be involved in wound healing and in the reduction of the surface tension at the ocular surface. The sequence is that of Surfactant-associated protein 3 (SFTA3) from Homo sapiens (Human).